A 177-amino-acid chain; its full sequence is Large ribosomal subunit protein bL17 (177 aa).

The disordered stretch occupies residues 136 to 177 (AEEEAPAVEAEATEAVEAPVEETAAAEAEAPAEEAADAEKAE). Over residues 138 to 149 (EEAPAVEAEATE) the composition is skewed to acidic residues. The segment covering 150-164 (AVEAPVEETAAAEAE) has biased composition (low complexity).

Belongs to the bacterial ribosomal protein bL17 family. As to quaternary structure, part of the 50S ribosomal subunit. Contacts protein L32.

The protein is Large ribosomal subunit protein bL17 of Bifidobacterium longum (strain NCC 2705).